The primary structure comprises 479 residues: MLAVPNMRFGIFLLWWGWVLATESRMHWPGREVHEMSKKGRPQRQRREVHEDAHKQVSPILRRSPDITKSPLTKSEQLLRIDDHDFSMRPGFGGPAIPVGVDVQVESLDSISEVDMDFTMTLYLRHYWKDERLSFPSTNNLSMTFDGRLVKKIWVPDMFFVHSKRSFIHDTTTDNVMLRVQPDGKVLYSLRVTVTAMCNMDFSRFPLDTQTCSLEIESYAYTEDDLMLYWKKGNDSLKTDERISLSQFLIQEFHTTTKLAFYSSTGWYNRLYINFTLRRHIFFFLLQTYFPATLMVMLSWVSFWIDRRAVPARVPLGITTVLTMSTIITGVNASMPRVSYIKAVDIYLWVSFVFVFLSVLEYAAVNYLTTVQERKEQKLREKLPCTSGLPPPRTAMLDGNYSDGEVNDLDNYMPENGEKPDRMMVQLTLASERSSPQRKSQRSSYVSMRIDTHAIDKYSRIIFPAAYILFNLIYWSIFS.

Residues 1–21 form the signal peptide; the sequence is MLAVPNMRFGIFLLWWGWVLA. Residues 22-280 are Extracellular-facing; sequence TESRMHWPGR…LYINFTLRRH (259 aa). The disordered stretch occupies residues 32-55; the sequence is EVHEMSKKGRPQRQRREVHEDAHK. Positions 45 to 55 are enriched in basic and acidic residues; the sequence is QRREVHEDAHK. Arg-125 is a binding site for 4-aminobutanoate. Asn-140 carries N-linked (GlcNAc...) asparagine glycosylation. Residue Ser-189 participates in 4-aminobutanoate binding. Cys-198 and Cys-212 form a disulfide bridge. Glu-217 is a binding site for 4-aminobutanoate. N-linked (GlcNAc...) asparagine glycans are attached at residues Asn-234 and Asn-274. Residues 281–301 form a helical membrane-spanning segment; it reads IFFFLLQTYFPATLMVMLSWV. The Cytoplasmic segment spans residues 302 to 313; sequence SFWIDRRAVPAR. Residues 314–334 traverse the membrane as a helical segment; that stretch reads VPLGITTVLTMSTIITGVNAS. Residues 335-345 are Extracellular-facing; it reads MPRVSYIKAVD. The chain crosses the membrane as a helical span at residues 346 to 366; sequence IYLWVSFVFVFLSVLEYAAVN. Residues 367–457 are Cytoplasmic-facing; that stretch reads YLTTVQERKE…MRIDTHAIDK (91 aa). Residues 458 to 478 form a helical membrane-spanning segment; that stretch reads YSRIIFPAAYILFNLIYWSIF. Residue Ser-479 is a topological domain, extracellular.

It belongs to the ligand-gated ion channel (TC 1.A.9) family. Gamma-aminobutyric acid receptor (TC 1.A.9.5) subfamily. GABRR1 sub-subfamily. In terms of assembly, three rho subunits (rho-1/GBRR1, rho-2/GBRR2 and rho-3/GBRR3) coassemble either to form functional homopentamers or heteropentamers. Rho-1/GBRR1 subunits can also associate with alpha-1/GBRA1 subunits to form a functional GABAAR. Interacts with SQSTM1. In terms of tissue distribution, highly expressed in the retina. Expressed in a lesser extent in brain, lung and thymus.

Its subcellular location is the postsynaptic cell membrane. It localises to the cell membrane. The catalysed reaction is chloride(in) = chloride(out). Its activity is regulated as follows. Inhibited by TPMPA, a rho-specific antagonist, when forming a homopentamer. In contrast with other GABAARs, rho-1 GABAAR is not inhibited by bicuculline, when forming a homopentamer. Its function is as follows. Rho subunit of the pentameric ligand-gated chloride channels responsible for mediating the effects of gamma-aminobutyric acid (GABA), the major inhibitory neurotransmitter in the brain. Rho-containing GABA-gated chloride channels are a subclass of GABA(A) receptors (GABAARs) entirely composed of rho subunits, where GABA molecules bind at the rho intersubunit interfaces. When activated by GABA, rho-GABAARs selectively allow the flow of chloride anions across the cell membrane down their electrochemical gradient. Rho-1 subunits are primarily expressed in retina where rho-1-containing GABAARs may play a role in retinal neurotransmission. Rho-1 GABAARs are also involved in neuronal tonic (extrasynaptic) and phasic (synaptic) transmission in the Purkinje neurons of the cerebellum. Rho-1 GABAARs may also contribute to the regulation of glial development in the cerebellum by controlling extrasynaptic transmission. In Homo sapiens (Human), this protein is Gamma-aminobutyric acid receptor subunit rho-1.